Here is a 2108-residue protein sequence, read N- to C-terminus: Mycocerosic acid synthase-like polyketide synthase (2108 aa).

The first 23 residues, 1 to 23, serve as a signal peptide directing secretion; sequence MGKERTKTVDRTRVTPVAVIGMG. Cysteine 24 carries the N-palmitoyl cysteine lipid modification. The S-diacylglycerol cysteine moiety is linked to residue cysteine 24. Positions 24–436 constitute a Ketosynthase family 3 (KS3) domain; sequence CRLPGGIDSP…GTNVHAIVEQ (413 aa). The active-site Acyl-thioester intermediate; for beta-ketoacyl synthase activity is the cysteine 185. Active-site for beta-ketoacyl synthase activity residues include histidine 320 and histidine 356. Positions 438-542 are linker domain (LD); sequence PVPAPESGAP…PYPPAVGQDD (105 aa). Residues 543–842 form an acyltransferase (AT) region; the sequence is RGPVWVFSGQ…AAALAGMRRE (300 aa). Serine 634 (acyl-ester intermediate; for acyltransferase activity) is an active-site residue. The interval 900 to 1184 is dehydratase (DH); it reads NTVAVHPLLG…LAVRGLQLGT (285 aa). The N-terminal hotdog fold stretch occupies residues 905–1025; sequence HPLLGSHVRL…AVLHVVREAD (121 aa). Residues 905–1191 form the PKS/mFAS DH domain; that stretch reads HPLLGSHVRL…LGTGASQASE (287 aa). Histidine 938 serves as the catalytic Proton acceptor; for dehydratase activity. Positions 1044 to 1191 are C-terminal hotdog fold; it reads PHKVDGAEVR…LGTGASQASE (148 aa). Catalysis depends on aspartate 1108, which acts as the Proton donor; for dehydratase activity. The pseudo beta-ketoacyl reductase (PsiKR) stretch occupies residues 1220–1391; sequence AWLLISTCDA…SGEDETAWRN (172 aa). The interval 1419–1743 is enoylreductase (ER); the sequence is AGMRLQIRTP…EHTGKLILDV (325 aa). A beta-ketoacyl reductase (KR) region spans residues 1765 to 2004; that stretch reads GSYIITGGLG…HSPFAEKFQS (240 aa). Residues 1773–1776, 1796–1799, 1824–1825, and 1897–1898 contribute to the NADP(+) site; these read LGGL, SRSQ, DI, and FS. Positions 2025-2101 constitute a Carrier domain; the sequence is EEWPDRLRRL…DLMCDKLAAD (77 aa). O-(pantetheine 4'-phosphoryl)serine is present on serine 2060.

In terms of assembly, homodimer.

The protein localises to the cell membrane. The protein operates within lipid metabolism; fatty acid biosynthesis. Its function is as follows. Polyketide synthase likely involved in the biosynthesis of a polymethyl-branched fatty acid (PMB-FA) that might only be produced during host infection. Is required for the full virulence of M.tuberculosis during host infection. This Mycobacterium tuberculosis (strain ATCC 25618 / H37Rv) protein is Mycocerosic acid synthase-like polyketide synthase.